The primary structure comprises 132 residues: Small ribosomal subunit protein uS8 (132 aa).

This sequence belongs to the universal ribosomal protein uS8 family. As to quaternary structure, part of the 30S ribosomal subunit. Contacts proteins S5 and S12.

In terms of biological role, one of the primary rRNA binding proteins, it binds directly to 16S rRNA central domain where it helps coordinate assembly of the platform of the 30S subunit. The chain is Small ribosomal subunit protein uS8 from Acetivibrio thermocellus (strain ATCC 27405 / DSM 1237 / JCM 9322 / NBRC 103400 / NCIMB 10682 / NRRL B-4536 / VPI 7372) (Clostridium thermocellum).